The primary structure comprises 401 residues: Adenosine 3'-phospho 5'-phosphosulfate transporter 2 (401 aa).

2 N-linked (GlcNAc...) asparagine glycosylation sites follow: Asn12 and Asn71. 6 consecutive transmembrane segments (helical) span residues 78 to 98, 111 to 131, 147 to 167, 170 to 190, 200 to 220, and 223 to 243; these read LTQF…YGYL, YGWY…LIEL, MIIA…LGYL, PTQV…GVFI, VSAA…DSTI, and NFNL…AVIG. N-linked (GlcNAc...) asparagine glycosylation occurs at Asn254. Helical transmembrane passes span 267-287, 298-317, 324-346, and 349-369; these read IGFV…PAVT, GYAF…VLAL, LIAV…IFFA, and FTFQ…LNVY.

Belongs to the nucleotide-sugar transporter family. SLC35B subfamily.

It localises to the golgi apparatus membrane. It carries out the reaction 3'-phosphoadenylyl sulfate(in) + adenosine 3',5'-bisphosphate(out) = 3'-phosphoadenylyl sulfate(out) + adenosine 3',5'-bisphosphate(in). Its function is as follows. Probably functions as a 3'-phosphoadenylyl sulfate:adenosine 3',5'-bisphosphate antiporter at the Golgi membranes. Mediates the transport from the cytosol into the lumen of the Golgi of 3'-phosphoadenylyl sulfate/adenosine 3'-phospho 5'-phosphosulfate (PAPS), a universal sulfuryl donor for sulfation events that take place in that compartment. In Pongo abelii (Sumatran orangutan), this protein is Adenosine 3'-phospho 5'-phosphosulfate transporter 2.